Reading from the N-terminus, the 249-residue chain is MINILVSNDDGVRAPGIIALTHALSEFAQVLTVAPDRNCSGASNSLTLTNPLRINNLENGYISVNGTPTDCVHLAIRQLCQTEPDIVVSGINAGANMGDDTLYSGTVAAAMEGRFLGLPAIAVSLVGKSLIHYDTAAIFAAKIVKGLLEHPISRDQILNVNVPDLPLAQIKGIKVTRLGARHKAEGMIKTQDPAGKDIYWLGPVGSEQDAGEGTDFGAVAAGYVSITPLTVDLTAYNQLDGLADWIIKI.

Residues Asp9, Asp10, Ser40, and Asn92 each coordinate a divalent metal cation.

The protein belongs to the SurE nucleotidase family. It depends on a divalent metal cation as a cofactor.

Its subcellular location is the cytoplasm. It catalyses the reaction a ribonucleoside 5'-phosphate + H2O = a ribonucleoside + phosphate. Nucleotidase that shows phosphatase activity on nucleoside 5'-monophosphates. This is 5'-nucleotidase SurE from Shewanella frigidimarina (strain NCIMB 400).